The primary structure comprises 179 residues: Exosome complex component Csl4 (179 aa).

The S1 motif domain occupies 58–137 (GDVVLGRVVD…RLSTKEEEMG (80 aa)). Zn(2+)-binding residues include cysteine 143, cysteine 146, cysteine 159, and cysteine 162.

It belongs to the CSL4 family. In terms of assembly, component of the archaeal exosome complex. Forms a trimer of Rrp4 and/or Csl4 subunits. The trimer associates with a hexameric ring-like arrangement composed of 3 Rrp41-Rrp42 heterodimers. Interacts with DnaG.

It localises to the cytoplasm. Non-catalytic component of the exosome, which is a complex involved in RNA degradation. Increases the RNA binding and the efficiency of RNA degradation. Helpful for the interaction of the exosome with A-poor RNAs. This Archaeoglobus fulgidus (strain ATCC 49558 / DSM 4304 / JCM 9628 / NBRC 100126 / VC-16) protein is Exosome complex component Csl4.